Consider the following 271-residue polypeptide: MRPYVLGLPRYANVAPLHHFLRLEGFRVLHAVPAELNRLLLSGEVGLSLVSSYFYLKHQDSLGLLPDFSVAVLGRVYSVNLFHKGALPHLARVALTTESATSVALLKLLLKEAGAGPRYERREGGLELLSAYDGVLLIGDRAIKAYAALLPEVPETPHALPTRFGEVEVADLSTLWFQRTHLPFVFAVWAYRRENPPPKALVQALREARREGLGRLREVAEAEARRLGVHPLLLQHYLWNFRYHLEEPDRLGLKAFAEALGLPFAPMFYPE.

This sequence belongs to the MqnA/MqnD family. MqnA subfamily.

The enzyme catalyses chorismate = 3-[(1-carboxyvinyl)-oxy]benzoate + H2O. It functions in the pathway quinol/quinone metabolism; menaquinone biosynthesis. Its function is as follows. Catalyzes the dehydration of chorismate into 3-[(1-carboxyvinyl)oxy]benzoate, a step in the biosynthesis of menaquinone (MK, vitamin K2). The protein is Chorismate dehydratase of Thermus thermophilus (strain ATCC 27634 / DSM 579 / HB8).